The chain runs to 351 residues: Ferrochelatase (351 aa).

Fe cation contacts are provided by His-220 and Glu-301.

This sequence belongs to the ferrochelatase family.

It is found in the cytoplasm. It carries out the reaction heme b + 2 H(+) = protoporphyrin IX + Fe(2+). It functions in the pathway porphyrin-containing compound metabolism; protoheme biosynthesis; protoheme from protoporphyrin-IX: step 1/1. Functionally, catalyzes the ferrous insertion into protoporphyrin IX. In Rhodobacter capsulatus (Rhodopseudomonas capsulata), this protein is Ferrochelatase.